The following is a 308-amino-acid chain: E3 ubiquitin-protein ligase SINAT2 (308 aa).

An RING-type zinc finger spans residues 60-96 (CPVCTNLMYPPIHQCPNGHTLCSNCKLRVQNTCPTCR). The interval 110–303 (VAESLEVPCR…QELKLRVTGR (194 aa)) is SBD. An SIAH-type zinc finger spans residues 113-173 (SLEVPCRYQN…LVVHLKDDHK (61 aa)). Residues C118, C125, H137, C141, C148, C155, H167, and H172 each contribute to the Zn(2+) site.

The protein belongs to the SINA (Seven in absentia) family. As to quaternary structure, interacts with RAP2-2. Interacts with SINAT6. Interacts with ATG6 and TRAF1A. Interacts with WAV3. Interacts with FREE1. Interacts with ELC/VPS23A.

It localises to the endosome. Its subcellular location is the multivesicular body. The protein resides in the cytoplasmic vesicle. The protein localises to the autophagosome. The enzyme catalyses S-ubiquitinyl-[E2 ubiquitin-conjugating enzyme]-L-cysteine + [acceptor protein]-L-lysine = [E2 ubiquitin-conjugating enzyme]-L-cysteine + N(6)-ubiquitinyl-[acceptor protein]-L-lysine.. The protein operates within protein modification; protein ubiquitination. Its function is as follows. E3 ubiquitin-protein ligase that mediates ubiquitination and subsequent proteasomal degradation of target proteins. E3 ubiquitin ligases accept ubiquitin from an E2 ubiquitin-conjugating enzyme in the form of a thioester and then directly transfers the ubiquitin to targeted substrates. It probably triggers the ubiquitin-mediated degradation of different substrates. Mediates the proteasomal-dependent degradation of ATG6, a component of the autophagosome complex. Requires TRAF1A/MUSE14 and TRAF1B/MUSE13 to target ATG6 for ubiquitination and subsequent regulation of autophagosome assembly. Modulates directly the ubiquitination and proteasomal-dependent degradation of FREE1, a component of the ESCRT-I complex. Modulates directly the ubiquitination and proteasomal-dependent degradation of ELC/VPS23A, a component of the ESCRT-I complex. This chain is E3 ubiquitin-protein ligase SINAT2, found in Arabidopsis thaliana (Mouse-ear cress).